The primary structure comprises 187 residues: GTP cyclohydrolase 1 (187 aa).

Residues cysteine 81, histidine 84, and cysteine 152 each coordinate Zn(2+).

This sequence belongs to the GTP cyclohydrolase I family. In terms of assembly, toroid-shaped homodecamer, composed of two pentamers of five dimers.

The catalysed reaction is GTP + H2O = 7,8-dihydroneopterin 3'-triphosphate + formate + H(+). It functions in the pathway cofactor biosynthesis; 7,8-dihydroneopterin triphosphate biosynthesis; 7,8-dihydroneopterin triphosphate from GTP: step 1/1. This is GTP cyclohydrolase 1 from Pyrobaculum aerophilum (strain ATCC 51768 / DSM 7523 / JCM 9630 / CIP 104966 / NBRC 100827 / IM2).